Reading from the N-terminus, the 149-residue chain is Nascent polypeptide-associated complex subunit beta-2 (149 aa).

Positions 38-103 (DKDNTKLQAE…PKENTLNGLY (66 aa)) constitute an NAC-A/B domain.

It belongs to the NAC-beta family. As to quaternary structure, part of the nascent polypeptide-associated complex (NAC), consisting of EGD2 and either EGD1 or BTT1. NAC associates with ribosomes via EGD1 or BTT1.

The protein resides in the cytoplasm. It localises to the nucleus. Its function is as follows. Acts as a component of the nascent polypeptide-associated complex (NAC), which promotes mitochondrial protein import by enhancing productive ribosome interactions with the outer mitochondrial membrane. Also blocks the inappropriate interaction of ribosomes translating non-secretory nascent polypeptides with translocation sites in the membrane of the endoplasmic reticulum. BTT1 may act as a transcription factor that exert a negative effect on the expression of several genes that are transcribed by RNA polymerase II. The chain is Nascent polypeptide-associated complex subunit beta-2 (BTT1) from Saccharomyces cerevisiae (strain ATCC 204508 / S288c) (Baker's yeast).